A 218-amino-acid polypeptide reads, in one-letter code: Non-structural protein NS3 (218 aa).

This sequence belongs to the orbivirus NS3 family.

Functionally, may play a role in the release of virions from infected cells. The protein is Non-structural protein NS3 (Segment-10) of Camelus dromedarius (Dromedary).